The primary structure comprises 157 residues: uncharacterized protein (157 aa).

The signal sequence occupies residues 1-17 (MSMKTKAAFHLVLFGLA). Residue Cys18 is the site of N-palmitoyl cysteine attachment. Residue Cys18 is the site of S-diacylglycerol cysteine attachment. The next 3 helical transmembrane spans lie at 42-64 (MVFD…YLYL), 98-120 (ASYI…YPLF), and 124-146 (IPFF…YVIS).

It is found in the cell membrane. This is an uncharacterized protein from Bacillus subtilis (strain 168).